We begin with the raw amino-acid sequence, 194 residues long: CMRF35-like molecule 5 (194 aa).

The signal sequence occupies residues 1-18 (MWLSPSLLLLILPGYSIA). The 107-residue stretch at 19 to 125 (AKITGPTTVN…LGVKVQVTIN (107 aa)) folds into the Ig-like V-type domain. Residues 19–165 (AKITGPTTVN…LTRSPLKSTH (147 aa)) are Extracellular-facing. An N-linked (GlcNAc...) asparagine glycan is attached at Asn28. Cysteines 39 and 107 form a disulfide. Residues 166–186 (FLFLFLLELPLLLSMLGTVLW) traverse the membrane as a helical segment. Over 187–194 (VNRPQRRS) the chain is Cytoplasmic.

Belongs to the CD300 family. As to quaternary structure, forms complexes with the CD300 family members with exception of CD300c. Post-translationally, N-glycosylated. As to expression, expression seems restricted to cells of myeloid lineage.

Its subcellular location is the cell membrane. This chain is CMRF35-like molecule 5 (CD300LD), found in Homo sapiens (Human).